The sequence spans 917 residues: Coiled-coil domain-containing protein 186 (917 aa).

Disordered regions lie at residues 1–52, 97–118, and 701–769; these read MKIR…SGDE, SCANTDTCPEDSGQIDDFPGGD, and TQRR…SVAV. Residues 33 to 44 are compositionally biased toward basic and acidic residues; that stretch reads TTEKTSELRDDS. Residues 220–736 adopt a coiled-coil conformation; it reads RYLQQELTVK…TENGNHDKDI (517 aa). Basic and acidic residues predominate over residues 722–736; sequence RKLEQTENGNHDKDI. The segment covering 737–748 has biased composition (low complexity); that stretch reads SSMGSRSSSSGS. S759 is modified (phosphoserine). 2 coiled-coil regions span residues 778–822 and 874–913; these read AMLI…IQSY and KLQAVLEDTLLKNITLKENLQTLGTEIERLIKHQHELEQR.

As to expression, expressed in postnatal germ cells.

This is Coiled-coil domain-containing protein 186 (Ccdc186) from Mus musculus (Mouse).